Reading from the N-terminus, the 279-residue chain is Methyltransferase ausD (279 aa).

Residues 124-125, 152-153, and Arg-244 each bind S-adenosyl-L-methionine; these read DL and DI.

The protein belongs to the class I-like SAM-binding methyltransferase superfamily. As to quaternary structure, homodimer.

It functions in the pathway secondary metabolite biosynthesis; terpenoid biosynthesis. Methyltransferase; part of the gene cluster that mediates the biosynthesis of calidodehydroaustin, a fungal meroterpenoid. The first step of the pathway is the synthesis of 3,5-dimethylorsellinic acid by the polyketide synthase ausA. 3,5-dimethylorsellinic acid is then prenylated by the polyprenyl transferase ausN. Further epoxidation by the FAD-dependent monooxygenase ausM and cyclization by the probable terpene cyclase ausL lead to the formation of protoaustinoid A. Protoaustinoid A is then oxidized to spiro-lactone preaustinoid A3 by the combined action of the FAD-binding monooxygenases ausB and ausC, and the dioxygenase ausE. Acid-catalyzed keto-rearrangement and ring contraction of the tetraketide portion of preaustinoid A3 by ausJ lead to the formation of preaustinoid A4. The aldo-keto reductase ausK, with the help of ausH, is involved in the next step by transforming preaustinoid A4 into isoaustinone which is in turn hydroxylated by the P450 monooxygenase ausI to form austinolide. The cytochrome P450 monooxygenase ausG modifies austinolide to austinol. Austinol is further acetylated to austin by the O-acetyltransferase ausP, which spontaneously changes to dehydroaustin. The cytochrome P450 monooxygenase ausR then converts dehydroaustin is into 7-dehydrodehydroaustin. The hydroxylation catalyzed by ausR permits the O-acetyltransferase ausQ to add an additional acetyl group to the molecule, leading to the formation of acetoxydehydroaustin. The short chain dehydrogenase ausT catalyzes the reduction of the double bond present between carbon atoms 1 and 2 to convert 7-dehydrodehydroaustin into 1,2-dihydro-7-hydroxydehydroaustin. AusQ catalyzes not only an acetylation reaction but also the addition of the PKS ausV diketide product to 1,2-dihydro-7-hydroxydehydroaustin, forming precalidodehydroaustin. Finally, the iron/alpha-ketoglutarate-dependent dioxygenase converts precalidodehydroaustin into calidodehydroaustin. This chain is Methyltransferase ausD, found in Aspergillus calidoustus.